We begin with the raw amino-acid sequence, 338 residues long: Heat-inducible transcription repressor HrcA (338 aa).

The protein belongs to the HrcA family.

In terms of biological role, negative regulator of class I heat shock genes (grpE-dnaK-dnaJ and groELS operons). Prevents heat-shock induction of these operons. This Bacillus cereus (strain AH187) protein is Heat-inducible transcription repressor HrcA.